A 159-amino-acid polypeptide reads, in one-letter code: 17 kDa surface antigen (159 aa).

The signal sequence occupies residues 1-19; sequence MKLLSKIMIIALAASMLQA. Cys-20 carries the N-palmitoyl cysteine lipid modification. Cys-20 is lipidated: S-diacylglycerol cysteine.

This sequence belongs to the rickettsiale 17 kDa surface antigen family.

It localises to the cell outer membrane. This is 17 kDa surface antigen (omp) from Rickettsia prowazekii (strain Madrid E).